A 428-amino-acid polypeptide reads, in one-letter code: Arginine biosynthesis bifunctional protein ArgJ, mitochondrial (428 aa).

Residues T171, K197, T208, E294, N423, and S428 each coordinate substrate. T208 acts as the Nucleophile in catalysis.

It belongs to the ArgJ family. In terms of assembly, heterodimer of an alpha and a beta chain. In terms of processing, the alpha and beta chains are autoproteolytically processed from a single precursor protein within the mitochondrion.

Its subcellular location is the mitochondrion matrix. It carries out the reaction N(2)-acetyl-L-ornithine + L-glutamate = N-acetyl-L-glutamate + L-ornithine. The catalysed reaction is L-glutamate + acetyl-CoA = N-acetyl-L-glutamate + CoA + H(+). It functions in the pathway amino-acid biosynthesis; L-arginine biosynthesis; L-ornithine and N-acetyl-L-glutamate from L-glutamate and N(2)-acetyl-L-ornithine (cyclic): step 1/1. The protein operates within amino-acid biosynthesis; L-arginine biosynthesis; N(2)-acetyl-L-ornithine from L-glutamate: step 1/4. In terms of biological role, catalyzes two activities which are involved in the cyclic version of arginine biosynthesis: the synthesis of acetylglutamate from glutamate and acetyl-CoA, and of ornithine by transacetylation between acetylornithine and glutamate. In Komagataella phaffii (strain GS115 / ATCC 20864) (Yeast), this protein is Arginine biosynthesis bifunctional protein ArgJ, mitochondrial.